Reading from the N-terminus, the 495-residue chain is MTALGITVALLVWLVTLLLISIWKHIHSSWKLPPGPFPLPIVGNIFQLDLKNIPKSFTMLAERYGPVFTVYLGSRRIVVLHGYKAVKEVLLHYKNEFSGRGEIPTFQVHKDKGVIFNNGPTWRDTRRFSLTTLRDFGMGKQGNEQRIQREAHFLLEALRKTHGQPFDPTFLIGCAPCNVISDILFRQHFDYNDKTCLRLMSMFNENFYLLSTGWIQLYNNFSGYLRYLPGSHRKLMKNISEIKDYALERVKDHRDSLEPSCPRDFTDTLLMEMEKEKYSAEPIYTLDNIAVTVADMFFAGTETTSTTLRYGLLILMKYPEVEEKLHEEIDRVIGPNRIPAIKDRLVMPYLDAVVHEIQRFIDLIPSNLPHEATRDTDFRDYIIPKGTVVIPTLDSVLYDSQEFPEPEKFKPEHFLNENGKFKYSDHFKAFSAGKRVCVGEGLARMELFLFMAAILQHFNLKSLVDPKDIDLSPIAIGFAKIPPHYKLCVIPRSQV.

298–303 (FAGTET) serves as a coordination point for substrate. C437 is a heme binding site.

Belongs to the cytochrome P450 family. Interacts with chaperones HSP70 and HSP90; this interaction is required for initial targeting to mitochondria. Heme is required as a cofactor.

The protein localises to the endoplasmic reticulum membrane. It is found in the microsome membrane. The protein resides in the mitochondrion inner membrane. It carries out the reaction an organic molecule + reduced [NADPH--hemoprotein reductase] + O2 = an alcohol + oxidized [NADPH--hemoprotein reductase] + H2O + H(+). It catalyses the reaction (5Z,8Z,11Z)-eicosatrienoate + reduced [NADPH--hemoprotein reductase] + O2 = 19-hydroxy-(5Z,8Z,11Z)-eicosatrienoate + oxidized [NADPH--hemoprotein reductase] + H2O + H(+). The enzyme catalyses (5Z,8Z,11Z,14Z,17Z)-eicosapentaenoate + reduced [NADPH--hemoprotein reductase] + O2 = 19-hydroxy-(5Z,8Z,11Z,14Z,17Z)-eicosapentaenoate + oxidized [NADPH--hemoprotein reductase] + H2O + H(+). The catalysed reaction is (4Z,7Z,10Z,13Z,16Z,19Z)-docosahexaenoate + reduced [NADPH--hemoprotein reductase] + O2 = 21-hydroxy-(4Z,7Z,10Z,13Z,16Z,19Z)-docosahexaenoate + oxidized [NADPH--hemoprotein reductase] + H2O + H(+). It carries out the reaction dodecanoate + reduced [NADPH--hemoprotein reductase] + O2 = 11-hydroxydodecanoate + oxidized [NADPH--hemoprotein reductase] + H2O + H(+). It catalyses the reaction tetradecanoate + reduced [NADPH--hemoprotein reductase] + O2 = 13-hydroxytetradecanoate + oxidized [NADPH--hemoprotein reductase] + H2O + H(+). The enzyme catalyses 4-nitrophenol + NADPH + O2 + H(+) = 4-nitrocatechol + NADP(+) + H2O. Its pathway is lipid metabolism; fatty acid metabolism. The omega-1 hydroxylase activity is stimulated by cytochrome b5. Its function is as follows. A cytochrome P450 monooxygenase involved in the metabolism of fatty acids. Mechanistically, uses molecular oxygen inserting one oxygen atom into a substrate, and reducing the second into a water molecule, with two electrons provided by NADPH via cytochrome P450 reductase (NADPH--hemoprotein reductase). Catalyzes the hydroxylation of carbon-hydrogen bonds. Hydroxylates fatty acids specifically at the omega-1 position displaying the highest catalytic activity for saturated fatty acids. May be involved in the oxidative metabolism of xenobiotics. The polypeptide is Cytochrome P450 2E1 (CYP2E1) (Sus scrofa (Pig)).